The chain runs to 147 residues: MGTTKMVSLLNHSLNVTTKDGRTFVGQLLAFDGFMNLVLSDCQEYRHIKKQNVPSNSVYEEKRMLGLVILRGEFIVSLSVQGPPPMDPSMRGSLLSGPGVARPAGRGIPLGQAPVGLAGPVRGVGYTAPPPPAGFGRGAPPPGFRPV.

The Sm domain maps to 1-84 (MGTTKMVSLL…IVSLSVQGPP (84 aa)). Disordered regions lie at residues 87–106 (DPSM…PAGR) and 128–147 (APPP…FRPV).

The protein belongs to the snRNP SmB/SmN family. As to quaternary structure, belongs to the 40S cdc5-associated complex (or cwf complex), a spliceosome sub-complex reminiscent of a late-stage spliceosome composed of the U2, U5 and U6 snRNAs and at least brr2, cdc5, cwf2/prp3, cwf3/syf1, cwf4/syf3, cwf5/ecm2, spp42/cwf6, cwf7/spf27, cwf8, cwf9, cwf10, cwf11, cwf12, prp45/cwf13, cwf14, cwf15, cwf16, cwf17, cwf18, cwf19, cwf20, cwf21, cwf22, cwf23, cwf24, cwf25, cwf26, cyp7/cwf27, cwf28, cwf29/ist3, lea1, msl1, prp5/cwf1, prp10, prp12/sap130, prp17, prp22, sap61, sap62, sap114, sap145, slu7, smb1, smd1, smd3, smf1, smg1 and syf2.

The protein localises to the nucleus. The protein resides in the cytoplasm. Functionally, plays a role in pre-mRNA splicing as a core component of the spliceosomal U1, U2, U4 and U5 small nuclear ribonucleoproteins (snRNPs), the building blocks of the spliceosome. This is Small nuclear ribonucleoprotein-associated protein B (smb1) from Schizosaccharomyces pombe (strain 972 / ATCC 24843) (Fission yeast).